Consider the following 197-residue polypeptide: Imidazoleglycerol-phosphate dehydratase (197 aa).

It belongs to the imidazoleglycerol-phosphate dehydratase family.

It is found in the cytoplasm. It catalyses the reaction D-erythro-1-(imidazol-4-yl)glycerol 3-phosphate = 3-(imidazol-4-yl)-2-oxopropyl phosphate + H2O. The protein operates within amino-acid biosynthesis; L-histidine biosynthesis; L-histidine from 5-phospho-alpha-D-ribose 1-diphosphate: step 6/9. The chain is Imidazoleglycerol-phosphate dehydratase from Cellvibrio japonicus (strain Ueda107) (Pseudomonas fluorescens subsp. cellulosa).